The following is a 2183-amino-acid chain: Genome polyprotein (2183 aa).

Glycine 2 carries the N-myristoyl glycine; by host lipid modification. Over 2-1493 the chain is Cytoplasmic; it reads GAQVSTQKTG…HVSRAFICLQ (1492 aa). The tract at residues 566-582 is amphipathic alpha-helix; the sequence is FYQGPTEESVERAMGRV. Active-site for protease 2A activity residues include histidine 870 and aspartate 888. Residues cysteine 905 and cysteine 907 each contribute to the Zn(2+) site. The active-site For protease 2A activity is cysteine 959. Residues cysteine 965 and histidine 967 each coordinate Zn(2+). The interval 1099-1171 is membrane-binding; that stretch reads NNGWLKKFTE…EQSAPSQSDQ (73 aa). Residues 1099-1237 form an oligomerization region; sequence NNGWLKKFTE…SPGAGKSVAT (139 aa). The tract at residues 1120-1124 is RNA-binding; that stretch reads AVKIQ. Residues 1203-1359 enclose the SF3 helicase domain; the sequence is EKKMSNYIQF…SMYSQNGKIN (157 aa). 3 residues coordinate Zn(2+): cysteine 1367, cysteine 1379, and cysteine 1384. The C4-type; degenerate zinc-finger motif lies at 1367–1384; it reads CDEECCPVNFKRCCPLVC. The RNA-binding stretch occupies residues 1411-1418; it reads EYNHRHSV. The oligomerization stretch occupies residues 1422 to 1427; sequence LEALFQ. The stretch at 1494-1509 is an intramembrane region; the sequence is ALTTFVSVAGIIYIIY. The Cytoplasmic segment spans residues 1510–2183; sequence KLFAGFQGAY…TLRRKWLDSF (674 aa). Tyrosine 1519 carries the O-(5'-phospho-RNA)-tyrosine modification. The Peptidase C3 domain occupies 1539 to 1717; it reads GPAFEFAVAM…FSAGLLKHYF (179 aa). Catalysis depends on for protease 3C activity residues histidine 1578, glutamate 1609, and cysteine 1685. Residues 1948-2064 form the RdRp catalytic domain; that stretch reads GHLIAFDYSG…SYPWPIDASL (117 aa). Mg(2+) contacts are provided by aspartate 1954 and aspartate 2050.

The protein belongs to the picornaviruses polyprotein family. Interacts with capsid protein VP1 and capsid protein VP3 to form heterotrimeric protomers. As to quaternary structure, interacts with capsid protein VP0, and capsid protein VP3 to form heterotrimeric protomers. Five protomers subsequently associate to form pentamers which serve as building blocks for the capsid. Interacts with capsid protein VP2, capsid protein VP3 and capsid protein VP4 following cleavage of capsid protein VP0. Interacts with host CXADR. In terms of assembly, interacts with capsid protein VP1 and capsid protein VP3 in the mature capsid. Interacts with capsid protein VP0 and capsid protein VP1 to form heterotrimeric protomers. Five protomers subsequently associate to form pentamers which serve as building blocks for the capsid. Interacts with capsid protein VP4 in the mature capsid. Interacts with protein 2C; this interaction may be important for virion morphogenesis. As to quaternary structure, interacts with capsid protein VP1 and capsid protein VP3. In terms of assembly, homodimer. Homohexamer; forms a hexameric ring structure with 6-fold symmetry characteristic of AAA+ ATPases. Interacts (via N-terminus) with host RTN3 (via reticulon domain); this interaction is important for viral replication. Interacts with capsid protein VP3; this interaction may be important for virion morphogenesis. As to quaternary structure, interacts with protein 3CD. In terms of assembly, homodimer. Interacts with host GBF1. Interacts (via GOLD domain) with host ACBD3 (via GOLD domain); this interaction allows the formation of a viral protein 3A/ACBD3 heterotetramer with a 2:2 stoichiometry, which will stimulate the recruitment of host PI4KB in order to synthesize PI4P at the viral RNA replication sites. Interacts with RNA-directed RNA polymerase. As to quaternary structure, interacts with protein 3AB and with RNA-directed RNA polymerase. In terms of assembly, interacts with Viral protein genome-linked and with protein 3CD. The cofactor is Mg(2+). Specific enzymatic cleavages in vivo by the viral proteases yield processing intermediates and the mature proteins. In terms of processing, myristoylation is required for the formation of pentamers during virus assembly. Further assembly of 12 pentamers and a molecule of genomic RNA generates the provirion. Post-translationally, during virion maturation, immature virions are rendered infectious following cleavage of VP0 into VP4 and VP2. This maturation seems to be an autocatalytic event triggered by the presence of RNA in the capsid and it is followed by a conformational change infectious virion. Myristoylation is required during RNA encapsidation and formation of the mature virus particle. In terms of processing, VPg is uridylylated by the polymerase into VPg-pUpU. This acts as a nucleotide-peptide primer for the genomic RNA replication.

It localises to the virion. It is found in the host cytoplasm. The protein localises to the host cytoplasmic vesicle membrane. Its subcellular location is the host nucleus. The catalysed reaction is a ribonucleoside 5'-triphosphate + H2O = a ribonucleoside 5'-diphosphate + phosphate + H(+). The enzyme catalyses Selective cleavage of Tyr-|-Gly bond in the picornavirus polyprotein.. It carries out the reaction RNA(n) + a ribonucleoside 5'-triphosphate = RNA(n+1) + diphosphate. It catalyses the reaction Selective cleavage of Gln-|-Gly bond in the poliovirus polyprotein. In other picornavirus reactions Glu may be substituted for Gln, and Ser or Thr for Gly.. With respect to regulation, replication or transcription is subject to high level of random mutations by the nucleotide analog ribavirin. Forms an icosahedral capsid of pseudo T=3 symmetry with capsid proteins VP2 and VP3. The capsid is 300 Angstroms in diameter, composed of 60 copies of each capsid protein and enclosing the viral positive strand RNA genome. Capsid protein VP1 mainly forms the vertices of the capsid. Capsid protein VP1 interacts with host CXADR to provide virion attachment to target host cells. This attachment induces virion internalization. Tyrosine kinases are probably involved in the entry process. After binding to its receptor, the capsid undergoes conformational changes. Capsid protein VP1 N-terminus (that contains an amphipathic alpha-helix) and capsid protein VP4 are externalized. Together, they shape a pore in the host membrane through which viral genome is translocated to host cell cytoplasm. Its function is as follows. Forms an icosahedral capsid of pseudo T=3 symmetry with capsid proteins VP2 and VP3. The capsid is 300 Angstroms in diameter, composed of 60 copies of each capsid protein and enclosing the viral positive strand RNA genome. Functionally, lies on the inner surface of the capsid shell. After binding to the host receptor, the capsid undergoes conformational changes. Capsid protein VP4 is released, Capsid protein VP1 N-terminus is externalized, and together, they shape a pore in the host membrane through which the viral genome is translocated into the host cell cytoplasm. In terms of biological role, component of immature procapsids, which is cleaved into capsid proteins VP4 and VP2 after maturation. Allows the capsid to remain inactive before the maturation step. Cysteine protease that cleaves viral polyprotein and specific host proteins. It is responsible for the autocatalytic cleavage between the P1 and P2 regions, which is the first cleavage occurring in the polyprotein. Also cleaves the host translation initiation factor EIF4G1, in order to shut down the capped cellular mRNA translation. Inhibits the host nucleus-cytoplasm protein and RNA trafficking by cleaving host members of the nuclear pores. Counteracts stress granule formation probably by antagonizing its assembly or promoting its dissassembly. Cleaves and inhibits host IFIH1/MDA5, thereby inhibiting the type-I IFN production and the establishment of the antiviral state. Cleaves and inhibits host MAVS, thereby inhibiting the type-I IFN production and the establishment of the antiviral state. Its function is as follows. Plays an essential role in the virus replication cycle by acting as a viroporin. Creates a pore in the host endoplasmic reticulum and as a consequence releases Ca2+ in the cytoplasm of infected cell. In turn, high levels of cytoplasmic calcium may trigger membrane trafficking and transport of viral ER-associated proteins to viroplasms, sites of viral genome replication. Functionally, induces and associates with structural rearrangements of intracellular membranes. Displays RNA-binding, nucleotide binding and NTPase activities. May play a role in virion morphogenesis and viral RNA encapsidation by interacting with the capsid protein VP3. In terms of biological role, localizes the viral replication complex to the surface of membranous vesicles. Together with protein 3CD binds the Cis-Active RNA Element (CRE) which is involved in RNA synthesis initiation. Acts as a cofactor to stimulate the activity of 3D polymerase, maybe through a nucleid acid chaperone activity. Localizes the viral replication complex to the surface of membranous vesicles. It inhibits host cell endoplasmic reticulum-to-Golgi apparatus transport and causes the disassembly of the Golgi complex, possibly through GBF1 interaction. This would result in depletion of MHC, trail receptors and IFN receptors at the host cell surface. Plays an essential role in viral RNA replication by recruiting ACBD3 and PI4KB at the viral replication sites, thereby allowing the formation of the rearranged membranous structures where viral replication takes place. Its function is as follows. Acts as a primer for viral RNA replication and remains covalently bound to viral genomic RNA. VPg is uridylylated prior to priming replication into VPg-pUpU. The oriI viral genomic sequence may act as a template for this. The VPg-pUpU is then used as primer on the genomic RNA poly(A) by the RNA-dependent RNA polymerase to replicate the viral genome. During genome replication, the VPg-RNA linkage is removed by the host TDP2, thereby accelerating replication. During the late stage of the replication cycle, host TDP2 is excluded from sites of viral RNA synthesis and encapsidation, allowing for the generation of progeny virions. Functionally, involved in the viral replication complex and viral polypeptide maturation. It exhibits protease activity with a specificity and catalytic efficiency that is different from protease 3C. Protein 3CD lacks polymerase activity. Protein 3CD binds to the 5'UTR of the viral genome. In terms of biological role, replicates the viral genomic RNA on the surface of intracellular membranes. May form linear arrays of subunits that propagate along a strong head-to-tail interaction called interface-I. Covalently attaches UMP to a tyrosine of VPg, which is used to prime RNA synthesis. The positive stranded RNA genome is first replicated at virus induced membranous vesicles, creating a dsRNA genomic replication form. This dsRNA is then used as template to synthesize positive stranded RNA genomes. ss(+)RNA genomes are either translated, replicated or encapsidated. Major viral protease that mediates proteolytic processing of the polyprotein. Cleaves host EIF5B, contributing to host translation shutoff. Also cleaves host PABPC1, contributing to host translation shutoff. Cleaves host NLRP1, triggers host N-glycine-mediated degradation of the autoinhibitory NLRP1 N-terminal fragment. This is Genome polyprotein from Coxsackievirus B4 (strain JVB / Benschoten / New York/51).